The sequence spans 312 residues: Serine acetyltransferase 5 (312 aa).

Residues methionine 1–leucine 17 show a composition bias toward basic and acidic residues. Positions methionine 1–glutamate 25 are disordered.

The protein belongs to the transferase hexapeptide repeat family. As to quaternary structure, homomultimer. As to expression, mostly expressed in stems, flowers and siliques. Localized in vascular tissues, particularly in phloem.

It localises to the cytoplasm. The enzyme catalyses L-serine + acetyl-CoA = O-acetyl-L-serine + CoA. It functions in the pathway amino-acid biosynthesis; L-cysteine biosynthesis; L-cysteine from L-serine: step 1/2. With respect to regulation, feedback inhibitions by L-Ser and acetyl-CoA. This is Serine acetyltransferase 5 (SAT5) from Arabidopsis thaliana (Mouse-ear cress).